The sequence spans 72 residues: Translation initiation factor IF-1 (72 aa).

Residues 1–72 (MAKEDTLEFP…TKGRINYRFK (72 aa)) enclose the S1-like domain.

This sequence belongs to the IF-1 family. In terms of assembly, component of the 30S ribosomal translation pre-initiation complex which assembles on the 30S ribosome in the order IF-2 and IF-3, IF-1 and N-formylmethionyl-tRNA(fMet); mRNA recruitment can occur at any time during PIC assembly.

It is found in the cytoplasm. In terms of biological role, one of the essential components for the initiation of protein synthesis. Stabilizes the binding of IF-2 and IF-3 on the 30S subunit to which N-formylmethionyl-tRNA(fMet) subsequently binds. Helps modulate mRNA selection, yielding the 30S pre-initiation complex (PIC). Upon addition of the 50S ribosomal subunit IF-1, IF-2 and IF-3 are released leaving the mature 70S translation initiation complex. The sequence is that of Translation initiation factor IF-1 from Roseobacter denitrificans (strain ATCC 33942 / OCh 114) (Erythrobacter sp. (strain OCh 114)).